Consider the following 173-residue polypeptide: Photosystem I assembly protein Ycf3 (173 aa).

TPR repeat units follow at residues 35 to 68 (AFVY…EEDT), 72 to 105 (GYIL…NPRL), and 120 to 153 (GEKE…APNN).

The protein belongs to the Ycf3 family.

The protein localises to the cellular thylakoid membrane. Essential for the assembly of the photosystem I (PSI) complex. May act as a chaperone-like factor to guide the assembly of the PSI subunits. The chain is Photosystem I assembly protein Ycf3 from Nostoc punctiforme (strain ATCC 29133 / PCC 73102).